The following is a 117-amino-acid chain: Immunoglobulin kappa variable 1-39 (117 aa).

Positions 1 to 22 (MDMRVPAQLLGLLLLWLRGARC) are cleaved as a signal peptide. Residues 23–45 (DIQMTQSPSSLSASVGDRVTITC) form a framework-1 region. One can recognise an Ig-like domain in the interval 24-117 (IQMTQSPSSL…YYCQQSYSTP (94 aa)). C45 and C110 are oxidised to a cystine. The interval 46–56 (RASQSISSYLN) is complementarity-determining-1. The tract at residues 57-71 (WYQQKPGKAPKLLIY) is framework-2. The interval 72-78 (AASSLQS) is complementarity-determining-2. The interval 79 to 110 (GVPSRFSGSGSGTDFTLTISSLQPEDFATYYC) is framework-3. Positions 111–117 (QQSYSTP) are complementarity-determining-3.

Immunoglobulins are composed of two identical heavy chains and two identical light chains; disulfide-linked.

It is found in the secreted. Its subcellular location is the cell membrane. Functionally, v region of the variable domain of immunoglobulin light chains that participates in the antigen recognition. Immunoglobulins, also known as antibodies, are membrane-bound or secreted glycoproteins produced by B lymphocytes. In the recognition phase of humoral immunity, the membrane-bound immunoglobulins serve as receptors which, upon binding of a specific antigen, trigger the clonal expansion and differentiation of B lymphocytes into immunoglobulins-secreting plasma cells. Secreted immunoglobulins mediate the effector phase of humoral immunity, which results in the elimination of bound antigens. The antigen binding site is formed by the variable domain of one heavy chain, together with that of its associated light chain. Thus, each immunoglobulin has two antigen binding sites with remarkable affinity for a particular antigen. The variable domains are assembled by a process called V-(D)-J rearrangement and can then be subjected to somatic hypermutations which, after exposure to antigen and selection, allow affinity maturation for a particular antigen. The chain is Immunoglobulin kappa variable 1-39 from Homo sapiens (Human).